Reading from the N-terminus, the 557-residue chain is Syntaxin-binding protein 4 (557 aa).

Phosphoserine is present on residues serine 10 and serine 12. A PDZ domain is found at 19–105 (AFRVITVTKE…RSESPWEIAF (87 aa)). A Phosphoserine; by PKB/AKT2 modification is found at serine 99. Positions 142–154 (PSETLLPKTSSTP) are enriched in low complexity. Residues 142–214 (PSETLLPKTS…SGPQGKISLN (73 aa)) are disordered. Residues 179–194 (SPITSLDNSPADTSNA) are compositionally biased toward polar residues. Phosphoserine is present on serine 216. A coiled-coil region spans residues 298-408 (ADEVGKLRQE…NKESVQDLRK (111 aa)). Serine 467 bears the Phosphoserine mark. A WW domain is found at 500–533 (DCLPYGWEEAYTADGIKYFINHVTQTTSWIHPVM).

In terms of assembly, interacts with STX4A. In terms of processing, phosphorylated on Ser-99 by PKB/AKT2 after insulin treatment. Phosphorylation on Ser-99 abolishes the interaction with STX4A. In terms of tissue distribution, detected in skeletal muscle, heart, testis, adipocytes and pancreatic islet cells.

It is found in the cytoplasm. Functionally, plays a role in the translocation of transport vesicles from the cytoplasm to the plasma membrane. Inhibits the translocation of SLC2A4 from intracellular vesicles to the plasma membrane by STX4A binding and preventing the interaction between STX4A and VAMP2. Stimulation with insulin disrupts the interaction with STX4A, leading to increased levels of SLC2A4 at the plasma membrane. May also play a role in the regulation of insulin release by pancreatic beta cells after stimulation by glucose. The sequence is that of Syntaxin-binding protein 4 (Stxbp4) from Mus musculus (Mouse).